The chain runs to 292 residues: Mitochondrial fission regulator 1-like (292 aa).

T30 carries the phosphothreonine modification. Position 41 is a phosphoserine (S41). S103 bears the Phosphoserine; by AMPK mark. S110, S224, and S225 each carry phosphoserine. Residue S238 is modified to Phosphoserine; by AMPK. A phosphoserine mark is found at S261 and S273.

This sequence belongs to the MTFR1 family. Post-translationally, phosphorylated by AMPK. Upon stress, phosphorylation at Ser-103 and Ser-238 by AMPK is sufficient to induce mitochondrial fragmentation.

It localises to the mitochondrion outer membrane. Functionally, mitochondrial protein required for adaptation of miochondrial dynamics to metabolic changes. Regulates mitochondrial morphology at steady state and mediates AMPK-dependent stress-induced mitochondrial fragmentation via the control of OPA1 levels. This Homo sapiens (Human) protein is Mitochondrial fission regulator 1-like.